A 293-amino-acid chain; its full sequence is MSGLGRSRRGGRSRVDQEERFPQGLWTGVAMRSCPEEQYWDPLLGTCMSCKTICNHQSQRTCAAFCRSLSCRKEQGKFYDHLLRDCISCASICGQHPKQCAYFCENKLRSPVNLPPELRRQRSGEVENNSDNSGRYQGLEHRGSEASPALPGLKLSADQVALVYSTLGLCLCAVLCCFLVAVACFLKKRGDPCSCQPRSRPRQSPAKSSQDHAMEAGSPVSTSPEPVETCSFCFPECRAPTQESAVTPGTPDPTCAGRWGCHTRTTVLQPCPHIPDSGLGIVCVPAQEGGPGA.

Residues 1–165 are Extracellular-facing; the sequence is MSGLGRSRRG…SADQVALVYS (165 aa). 2 TNFR-Cys repeats span residues 33-67 and 70-104; these read SCPEEQYWDPLLGTCMSCKTICNHQSQRTCAAFCR and SCRKEQGKFYDHLLRDCISCASICGQHPKQCAYFC. Intrachain disulfides connect C34–C47, C50–C62, C54–C66, C71–C86, C89–C100, and C93–C104. The interval 115-146 is disordered; that stretch reads PPELRRQRSGEVENNSDNSGRYQGLEHRGSEA. The span at 126 to 135 shows a compositional bias: polar residues; the sequence is VENNSDNSGR. Residue N128 is glycosylated (N-linked (GlcNAc...) asparagine). A helical; Signal-anchor for type III membrane protein membrane pass occupies residues 166-186; it reads TLGLCLCAVLCCFLVAVACFL. Topologically, residues 187 to 293 are cytoplasmic; sequence KKRGDPCSCQ…VPAQEGGPGA (107 aa). Residues 192-226 are disordered; the sequence is PCSCQPRSRPRQSPAKSSQDHAMEAGSPVSTSPEP.

In terms of assembly, binds TRAF2, TRAF5 and TRAF6. Binds the NH2-terminal domain of CAMLG with its C-terminus. In terms of tissue distribution, highly expressed in spleen, thymus, small intestine and peripheral blood leukocytes. Expressed in resting B-cells and activated T-cells, but not in resting T-cells.

The protein resides in the membrane. Receptor for TNFSF13/APRIL and TNFSF13B/TALL1/BAFF/BLYS that binds both ligands with similar high affinity. Mediates calcineurin-dependent activation of NF-AT, as well as activation of NF-kappa-B and AP-1. Involved in the stimulation of B- and T-cell function and the regulation of humoral immunity. This Homo sapiens (Human) protein is Tumor necrosis factor receptor superfamily member 13B (TNFRSF13B).